We begin with the raw amino-acid sequence, 573 residues long: Proline--tRNA ligase (573 aa).

This sequence belongs to the class-II aminoacyl-tRNA synthetase family. ProS type 1 subfamily. In terms of assembly, homodimer.

It localises to the cytoplasm. The enzyme catalyses tRNA(Pro) + L-proline + ATP = L-prolyl-tRNA(Pro) + AMP + diphosphate. In terms of biological role, catalyzes the attachment of proline to tRNA(Pro) in a two-step reaction: proline is first activated by ATP to form Pro-AMP and then transferred to the acceptor end of tRNA(Pro). As ProRS can inadvertently accommodate and process non-cognate amino acids such as alanine and cysteine, to avoid such errors it has two additional distinct editing activities against alanine. One activity is designated as 'pretransfer' editing and involves the tRNA(Pro)-independent hydrolysis of activated Ala-AMP. The other activity is designated 'posttransfer' editing and involves deacylation of mischarged Ala-tRNA(Pro). The misacylated Cys-tRNA(Pro) is not edited by ProRS. In Cupriavidus necator (strain ATCC 17699 / DSM 428 / KCTC 22496 / NCIMB 10442 / H16 / Stanier 337) (Ralstonia eutropha), this protein is Proline--tRNA ligase.